The chain runs to 159 residues: Probable minor fimbrial protein (159 aa).

Positions Met-1–Gly-6 are cleaved as a propeptide — leader sequence. Phe-7 is modified (N-methylphenylalanine). The helical transmembrane segment at Phe-7–Gln-29 threads the bilayer. 2 disulfide bridges follow: Cys-56-Cys-71 and Cys-140-Cys-153.

The protein belongs to the N-Me-Phe pilin family. The pili are polar flexible filaments of about 5.4 nanometers diameter and 2.5 micrometers average length; they consist of only a single polypeptide chain arranged in a helical configuration of five subunits per turn in the assembled pilus.

The protein resides in the fimbrium. It is found in the membrane. The chain is Probable minor fimbrial protein (fimZ) from Dichelobacter nodosus (Bacteroides nodosus).